Here is a 98-residue protein sequence, read N- to C-terminus: NADH-ubiquinone oxidoreductase chain 4L (98 aa).

Helical transmembrane passes span Met1 to Met21, Ala29 to Leu49, and Ile61 to Ile81.

The protein belongs to the complex I subunit 4L family. As to quaternary structure, core subunit of respiratory chain NADH dehydrogenase (Complex I) which is composed of 45 different subunits.

Its subcellular location is the mitochondrion inner membrane. The enzyme catalyses a ubiquinone + NADH + 5 H(+)(in) = a ubiquinol + NAD(+) + 4 H(+)(out). In terms of biological role, core subunit of the mitochondrial membrane respiratory chain NADH dehydrogenase (Complex I) which catalyzes electron transfer from NADH through the respiratory chain, using ubiquinone as an electron acceptor. Part of the enzyme membrane arm which is embedded in the lipid bilayer and involved in proton translocation. The sequence is that of NADH-ubiquinone oxidoreductase chain 4L (MT-ND4L) from Monodon monoceros (Narwhal).